A 131-amino-acid chain; its full sequence is MVTLYTSPSCTSCRKARAWLEEHNIPFTERNIFSEPLSLDEIKEILRMTEDGTDEIISTRSKVFQKLDVNIDQLPMKNLFNLIQKNPGLLRRPIILDEKRLQVGYNEDEIRRFLPRTVRTFQLREAQRMVN.

A disulfide bridge connects residues C10 and C13.

The protein belongs to the ArsC family. Spx subfamily. As to quaternary structure, interacts with the C-terminal domain of the alpha subunit of the RNAP.

Its subcellular location is the cytoplasm. In terms of biological role, global transcriptional regulator that plays a key role in stress response and exerts either positive or negative regulation of genes. Acts by interacting with the C-terminal domain of the alpha subunit of the RNA polymerase (RNAP). This interaction can enhance binding of RNAP to the promoter region of target genes and stimulate their transcription, or block interaction of RNAP with activator. The polypeptide is Global transcriptional regulator Spx 1 (Oceanobacillus iheyensis (strain DSM 14371 / CIP 107618 / JCM 11309 / KCTC 3954 / HTE831)).